The primary structure comprises 346 residues: Very-long-chain 3-oxoacyl-CoA reductase (346 aa).

Residues 19 to 39 (LIYGVLFVGVYKITTFTLSVG) traverse the membrane as a helical segment. The NADP(+) site is built by Val-65, Asp-119, Asn-146, Tyr-220, Lys-224, Val-253, and Ser-255. The Proton donor role is filled by Tyr-220. The active-site Lowers pKa of active site Tyr is Lys-224.

Belongs to the short-chain dehydrogenases/reductases (SDR) family.

The protein localises to the endoplasmic reticulum membrane. The enzyme catalyses a very-long-chain (3R)-3-hydroxyacyl-CoA + NADP(+) = a very-long-chain 3-oxoacyl-CoA + NADPH + H(+). It functions in the pathway lipid metabolism; fatty acid biosynthesis. Its function is as follows. Component of the microsomal membrane bound fatty acid elongation system, which produces the 26-carbon very long-chain fatty acids (VLCFA) from palmitate. Catalyzes the reduction of the 3-ketoacyl-CoA intermediate that is formed in each cycle of fatty acid elongation. VLCFAs serve as precursors for ceramide and sphingolipids. In Debaryomyces hansenii (strain ATCC 36239 / CBS 767 / BCRC 21394 / JCM 1990 / NBRC 0083 / IGC 2968) (Yeast), this protein is Very-long-chain 3-oxoacyl-CoA reductase.